A 443-amino-acid polypeptide reads, in one-letter code: Threonine/serine transporter TdcC (443 aa).

The next 11 helical transmembrane spans lie at 24–44 (WVLG…PISA), 45–65 (GIGG…IAFF), 95–115 (VGGV…LWIY), 140–160 (VVAL…KDLM), 163–183 (VMGY…LSLI), 207–227 (ILVT…FSPI), 259–279 (ASVL…FTLS), 319–339 (ASII…LGTL), 363–383 (LNMI…YINP), 385–405 (ILDL…CLLP), and 423–443 (SNYF…YQLM).

It belongs to the amino acid/polyamine transporter 2 family. SdaC/TdcC subfamily.

The protein resides in the cell inner membrane. The catalysed reaction is L-threonine(in) + H(+)(in) = L-threonine(out) + H(+)(out). It catalyses the reaction L-serine(in) + H(+)(in) = L-serine(out) + H(+)(out). In terms of biological role, involved in the import of threonine and serine into the cell, with the concomitant import of a proton (symport system). This Edwardsiella piscicida protein is Threonine/serine transporter TdcC.